The primary structure comprises 80 residues: Exodeoxyribonuclease 7 small subunit (80 aa).

The protein belongs to the XseB family. As to quaternary structure, heterooligomer composed of large and small subunits.

Its subcellular location is the cytoplasm. The catalysed reaction is Exonucleolytic cleavage in either 5'- to 3'- or 3'- to 5'-direction to yield nucleoside 5'-phosphates.. Functionally, bidirectionally degrades single-stranded DNA into large acid-insoluble oligonucleotides, which are then degraded further into small acid-soluble oligonucleotides. The protein is Exodeoxyribonuclease 7 small subunit of Pseudomonas paraeruginosa (strain DSM 24068 / PA7) (Pseudomonas aeruginosa (strain PA7)).